A 1177-amino-acid chain; its full sequence is DNA-directed RNA polymerase subunit beta' (1177 aa).

Cysteine 60, cysteine 62, cysteine 75, and cysteine 78 together coordinate Zn(2+). Positions 450, 452, and 454 each coordinate Mg(2+). 4 residues coordinate Zn(2+): cysteine 795, cysteine 869, cysteine 876, and cysteine 879.

This sequence belongs to the RNA polymerase beta' chain family. In terms of assembly, the RNAP catalytic core consists of 2 alpha, 1 beta, 1 beta' and 1 omega subunit. When a sigma factor is associated with the core the holoenzyme is formed, which can initiate transcription. The cofactor is Mg(2+). It depends on Zn(2+) as a cofactor.

The enzyme catalyses RNA(n) + a ribonucleoside 5'-triphosphate = RNA(n+1) + diphosphate. In terms of biological role, DNA-dependent RNA polymerase catalyzes the transcription of DNA into RNA using the four ribonucleoside triphosphates as substrates. This Clostridium botulinum (strain Eklund 17B / Type B) protein is DNA-directed RNA polymerase subunit beta'.